We begin with the raw amino-acid sequence, 238 residues long: Proenkephalin-A (238 aa).

Positions methionine 1–threonine 25 are cleaved as a signal peptide. Disulfide bonds link cysteine 27–cysteine 50, cysteine 31–cysteine 54, and cysteine 34–cysteine 66. A disordered region spans residues glutamine 76–histidine 103. 3 consecutive propeptides follow at residues serine 124–valine 167, alanine 177–leucine 195, and valine 206–glutamine 230.

It belongs to the opioid neuropeptide precursor family. In terms of tissue distribution, expressed by the venom gland. Moderately expressed in the venom gland transcriptome.

The protein localises to the secreted. Its function is as follows. Met-enkephalins compete with and mimic the effects of opiate drugs. They play a role in a number of physiologic functions, including pain perception and responses to stress. Enkephalin peptides found in Meiacanthus fangblennies induce physiological effects via their interaction with delta-type opioid receptors (OPRD1) (tested on M.grammistes). Therefore, finding a proenkephalin sequence in M.atrodorsalis venom suggests that this protein act in the same manner. This Meiacanthus atrodorsalis (Forktail blenny) protein is Proenkephalin-A.